Reading from the N-terminus, the 141-residue chain is Large ribosomal subunit protein uL11 (141 aa).

Belongs to the universal ribosomal protein uL11 family. Part of the ribosomal stalk of the 50S ribosomal subunit. Interacts with L10 and the large rRNA to form the base of the stalk. L10 forms an elongated spine to which L12 dimers bind in a sequential fashion forming a multimeric L10(L12)X complex. In terms of processing, one or more lysine residues are methylated.

Functionally, forms part of the ribosomal stalk which helps the ribosome interact with GTP-bound translation factors. The polypeptide is Large ribosomal subunit protein uL11 (Streptococcus equi subsp. equi (strain 4047)).